The following is an 864-amino-acid chain: Leucine--tRNA ligase (864 aa).

The short motif at 42 to 52 (PYPSGKLHMGH) is the 'HIGH' region element. Residues 624–628 (KMSKS) carry the 'KMSKS' region motif. Position 627 (Lys-627) interacts with ATP.

This sequence belongs to the class-I aminoacyl-tRNA synthetase family.

The protein resides in the cytoplasm. The catalysed reaction is tRNA(Leu) + L-leucine + ATP = L-leucyl-tRNA(Leu) + AMP + diphosphate. The sequence is that of Leucine--tRNA ligase from Burkholderia ambifaria (strain ATCC BAA-244 / DSM 16087 / CCUG 44356 / LMG 19182 / AMMD) (Burkholderia cepacia (strain AMMD)).